The sequence spans 341 residues: Phenylalanine--tRNA ligase alpha subunit (341 aa).

Glutamate 256 contributes to the Mg(2+) binding site.

This sequence belongs to the class-II aminoacyl-tRNA synthetase family. Phe-tRNA synthetase alpha subunit type 1 subfamily. In terms of assembly, tetramer of two alpha and two beta subunits. It depends on Mg(2+) as a cofactor.

Its subcellular location is the cytoplasm. The enzyme catalyses tRNA(Phe) + L-phenylalanine + ATP = L-phenylalanyl-tRNA(Phe) + AMP + diphosphate + H(+). The sequence is that of Phenylalanine--tRNA ligase alpha subunit from Leptospira interrogans serogroup Icterohaemorrhagiae serovar Lai (strain 56601).